The following is a 332-amino-acid chain: Malate dehydrogenase (332 aa).

NAD(+)-binding positions include 11–16 (GAGNVG) and aspartate 35. The substrate site is built by arginine 97 and arginine 103. NAD(+) is bound by residues asparagine 110 and 133–135 (VTN). Residues asparagine 135 and arginine 166 each contribute to the substrate site. The active-site Proton acceptor is histidine 190.

Belongs to the LDH/MDH superfamily. MDH type 3 family.

It catalyses the reaction (S)-malate + NAD(+) = oxaloacetate + NADH + H(+). Its function is as follows. Catalyzes the reversible oxidation of malate to oxaloacetate. The chain is Malate dehydrogenase from Hydrogenobaculum sp. (strain Y04AAS1).